A 307-amino-acid polypeptide reads, in one-letter code: Ornithine carbamoyltransferase (307 aa).

Carbamoyl phosphate contacts are provided by residues S50–T53, Q77, R101, and H128–Q131. L-ornithine contacts are provided by residues N160, D224, and S228–M229. Carbamoyl phosphate is bound by residues C264–L265 and R292.

The protein belongs to the aspartate/ornithine carbamoyltransferase superfamily. OTCase family.

The protein localises to the cytoplasm. The enzyme catalyses carbamoyl phosphate + L-ornithine = L-citrulline + phosphate + H(+). The protein operates within amino-acid biosynthesis; L-arginine biosynthesis; L-arginine from L-ornithine and carbamoyl phosphate: step 1/3. Its function is as follows. Reversibly catalyzes the transfer of the carbamoyl group from carbamoyl phosphate (CP) to the N(epsilon) atom of ornithine (ORN) to produce L-citrulline. The protein is Ornithine carbamoyltransferase of Mycolicibacterium gilvum (strain PYR-GCK) (Mycobacterium gilvum (strain PYR-GCK)).